Reading from the N-terminus, the 247-residue chain is Uridylate kinase (247 aa).

An ATP-binding site is contributed by 17–20 (KFSG). Gly-59 provides a ligand contact to UMP. Residues Gly-60 and Arg-64 each contribute to the ATP site. Residues Asp-79 and 140–147 (TGNPFFTT) contribute to the UMP site. Thr-167, Tyr-173, and Asp-176 together coordinate ATP.

Belongs to the UMP kinase family. In terms of assembly, homohexamer.

The protein resides in the cytoplasm. It catalyses the reaction UMP + ATP = UDP + ADP. It participates in pyrimidine metabolism; CTP biosynthesis via de novo pathway; UDP from UMP (UMPK route): step 1/1. Its activity is regulated as follows. Inhibited by UTP. In terms of biological role, catalyzes the reversible phosphorylation of UMP to UDP. The sequence is that of Uridylate kinase from Legionella pneumophila (strain Lens).